The following is a 1001-amino-acid chain: E3 ubiquitin-protein ligase etc-1 (1001 aa).

One can recognise an IQ domain in the interval 28–57 (QEKAARKVQKFWRGHRVQHNQRLLFRAEFD). Positions 66 to 115 (LEETIKMAQLLVNFYETNKDEERLVMTLSELVKLKTSDKEFEKRIRETQR) form a coiled coil. An HECT domain is found at 658-1001 (KVNDLKSMVR…INSGAGFELA (344 aa)). The active-site Glycyl thioester intermediate is C969.

As to quaternary structure, interacts with ify-1 and cyb-1.

It carries out the reaction S-ubiquitinyl-[E2 ubiquitin-conjugating enzyme]-L-cysteine + [acceptor protein]-L-lysine = [E2 ubiquitin-conjugating enzyme]-L-cysteine + N(6)-ubiquitinyl-[acceptor protein]-L-lysine.. Its pathway is protein modification; protein ubiquitination. E3 ubiquitin-protein ligase that accepts ubiquitin from E2 ubiquitin-conjugating enzymes, such as ubc-18, in the form of a thioester and then directly transfers the ubiquitin to targeted substrates. Ubiquitinates ify-1 and cyb-1 targeting them for degradation in post-meiotic embryos. This chain is E3 ubiquitin-protein ligase etc-1, found in Caenorhabditis elegans.